The following is a 508-amino-acid chain: Aromatase (508 aa).

Residue Cys437 participates in heme binding.

It belongs to the cytochrome P450 family. It depends on heme as a cofactor.

It is found in the membrane. The enzyme catalyses testosterone + 3 reduced [NADPH--hemoprotein reductase] + 3 O2 = 17beta-estradiol + formate + 3 oxidized [NADPH--hemoprotein reductase] + 4 H2O + 4 H(+). The catalysed reaction is androst-4-ene-3,17-dione + 3 reduced [NADPH--hemoprotein reductase] + 3 O2 = estrone + formate + 3 oxidized [NADPH--hemoprotein reductase] + 4 H2O + 4 H(+). Functionally, catalyzes the formation of aromatic C18 estrogens from C19 androgens. The chain is Aromatase (Cyp19a1) from Rattus norvegicus (Rat).